The primary structure comprises 236 residues: Pyridoxine 5'-phosphate synthase (236 aa).

Asn6 is a 3-amino-2-oxopropyl phosphate binding site. 8–9 lines the 1-deoxy-D-xylulose 5-phosphate pocket; the sequence is DH. Residue Arg17 participates in 3-amino-2-oxopropyl phosphate binding. His42 (proton acceptor) is an active-site residue. 1-deoxy-D-xylulose 5-phosphate contacts are provided by Arg44 and His49. Glu69 functions as the Proton acceptor in the catalytic mechanism. Thr99 serves as a coordination point for 1-deoxy-D-xylulose 5-phosphate. Residue His192 is the Proton donor of the active site. Residues Gly193 and 216–217 contribute to the 3-amino-2-oxopropyl phosphate site; that span reads GH.

This sequence belongs to the PNP synthase family. Homooctamer; tetramer of dimers.

The protein localises to the cytoplasm. The catalysed reaction is 3-amino-2-oxopropyl phosphate + 1-deoxy-D-xylulose 5-phosphate = pyridoxine 5'-phosphate + phosphate + 2 H2O + H(+). It participates in cofactor biosynthesis; pyridoxine 5'-phosphate biosynthesis; pyridoxine 5'-phosphate from D-erythrose 4-phosphate: step 5/5. Its function is as follows. Catalyzes the complicated ring closure reaction between the two acyclic compounds 1-deoxy-D-xylulose-5-phosphate (DXP) and 3-amino-2-oxopropyl phosphate (1-amino-acetone-3-phosphate or AAP) to form pyridoxine 5'-phosphate (PNP) and inorganic phosphate. This Aquifex pyrophilus protein is Pyridoxine 5'-phosphate synthase.